Reading from the N-terminus, the 493-residue chain is MDSVIRALQPYFERIPSVERPKGHVHFREKFGWTAAILLLYFILSNVPVFGLSPESIDIFAAYRALFAGSTGSIIALGIGPIVTASIILQLLVGAGIIKLDLTNPEDRAAYQDFQRFLVFVMIAVEAIPQIAGGLLKPDLNLAAQLGVSPGIISFLIFIQLFIGGVLIVYMDEVVSKWGIGSGVSLFILAGIAQSIVVGLFNWVIPPNSAMPAGIIPRWIWIAQNYPLDQLFTGSGLAFLLIQGGILALITTAAIILLVVFFEGTRVEIPLAHAVARGARGRFPIKLIYASVLPMIFVRALQANVVALGQVLHARGVTIFGEFVNGKAVSGLMFFLQPVSSPYDWIPSLVKSQGAAFAAIPDWMIYLHLLIDALILVVGGIIFAWFWVETSGMDARTVASQIAKSGMQVPGFRKSPQVLERVLSRYIPKVTILGGAIIGILTLVANMLGTIGNVSGTGLLLAVSIAYRFYEDLAKEQLTEMHPLIRRMLGEEA.

The Cytoplasmic portion of the chain corresponds to 1 to 21 (MDSVIRALQPYFERIPSVERP). The chain crosses the membrane as a helical span at residues 22-48 (KGHVHFREKFGWTAAILLLYFILSNVP). At 49 to 59 (VFGLSPESIDI) the chain is on the extracellular side. An intramembrane region (helical) is located at residues 60–67 (FAAYRALF). Residues 60 to 88 (FAAYRALFAGSTGSIIALGIGPIVTASII) form a discontinuously helical membrane-spanning segment. Residues 68 to 79 (AGSTGSIIALGI) lie within the membrane without spanning it. Residues 80–88 (GPIVTASII) constitute an intramembrane region (helical). At 89-109 (LQLLVGAGIIKLDLTNPEDRA) the chain is on the cytoplasmic side. A helical membrane pass occupies residues 110 to 134 (AYQDFQRFLVFVMIAVEAIPQIAGG). The Extracellular segment spans residues 135 to 151 (LLKPDLNLAAQLGVSPG). The chain crosses the membrane as a helical span at residues 152 to 176 (IISFLIFIQLFIGGVLIVYMDEVVS). Topologically, residues 177–182 (KWGIGS) are cytoplasmic. The helical transmembrane segment at 183-201 (GVSLFILAGIAQSIVVGLF) threads the bilayer. Over 202-244 (NWVIPPNSAMPAGIIPRWIWIAQNYPLDQLFTGSGLAFLLIQG) the chain is Extracellular. A helical transmembrane segment spans residues 245 to 266 (GILALITTAAIILLVVFFEGTR). Topologically, residues 267–291 (VEIPLAHAVARGARGRFPIKLIYAS) are cytoplasmic. A helical transmembrane segment spans residues 292-313 (VLPMIFVRALQANVVALGQVLH). Residues 314 to 367 (ARGVTIFGEFVNGKAVSGLMFFLQPVSSPYDWIPSLVKSQGAAFAAIPDWMIYL) are Extracellular-facing. A helical membrane pass occupies residues 368 to 387 (HLLIDALILVVGGIIFAWFW). The Cytoplasmic portion of the chain corresponds to 388–430 (VETSGMDARTVASQIAKSGMQVPGFRKSPQVLERVLSRYIPKV). The chain crosses the membrane as a helical span at residues 431 to 449 (TILGGAIIGILTLVANMLG). Residues 450 to 454 (TIGNV) are Extracellular-facing. A helical membrane pass occupies residues 455–469 (SGTGLLLAVSIAYRF). Topologically, residues 470–493 (YEDLAKEQLTEMHPLIRRMLGEEA) are cytoplasmic.

Belongs to the SecY/SEC61-alpha family. As to quaternary structure, component of the Sec protein translocase complex. Heterotrimer consisting of alpha (SecY), beta (SecG) and gamma (SecE) subunits. The heterotrimers can form oligomers, although 1 heterotrimer is thought to be able to translocate proteins. Interacts with the ribosome. May interact with SecDF, and other proteins may be involved.

It localises to the cell membrane. The central subunit of the protein translocation channel SecYEG. Consists of two halves formed by TMs 1-5 and 6-10. These two domains form a lateral gate at the front which open onto the bilayer between TMs 2 and 7, and are clamped together by SecE at the back. The channel is closed by both a pore ring composed of hydrophobic SecY resides and a short helix (helix 2A) on the extracellular side of the membrane which forms a plug. The plug probably moves laterally to allow the channel to open. The ring and the pore may move independently. The protein is Protein translocase subunit SecY of Archaeoglobus fulgidus (strain ATCC 49558 / DSM 4304 / JCM 9628 / NBRC 100126 / VC-16).